The sequence spans 200 residues: 3-isopropylmalate dehydratase small subunit (200 aa).

This sequence belongs to the LeuD family. LeuD type 1 subfamily. As to quaternary structure, heterodimer of LeuC and LeuD.

It catalyses the reaction (2R,3S)-3-isopropylmalate = (2S)-2-isopropylmalate. The protein operates within amino-acid biosynthesis; L-leucine biosynthesis; L-leucine from 3-methyl-2-oxobutanoate: step 2/4. Catalyzes the isomerization between 2-isopropylmalate and 3-isopropylmalate, via the formation of 2-isopropylmaleate. The sequence is that of 3-isopropylmalate dehydratase small subunit from Arthrobacter sp. (strain FB24).